The sequence spans 475 residues: CAAX prenyl protease 1 homolog (475 aa).

Residues 1–18 (MGMWASVDAMWDFPAEKR) lie on the Lumenal side of the membrane. The chain crosses the membrane as a helical span at residues 19–39 (IFGAVLLFSWTVYLWETFLAQ). The Nuclear segment spans residues 40–81 (RQRRIYKTTTRVPAELEQIMDSDTFEKSRLYQLDKSTFSFWS). Residues 82–102 (GLYSEVEGTFILLFGGIPYLW) form a helical membrane-spanning segment. The Lumenal segment spans residues 103 to 123 (RLSGQFCSSAGFGPEYEIIQS). The chain crosses the membrane as a helical span at residues 124–144 (LVFLLLATLFSALTGLPWSLY). Over 145–170 (NTFVIEEKHGFNHQTLEFFMKDAIKK) the chain is Nuclear. The helical transmembrane segment at 171–191 (FIVTQCILLPVSALLLYIIKI) threads the bilayer. The Lumenal portion of the chain corresponds to 192–195 (GGDY). Residues 196-216 (FFIYAWLFTLVVSLVLVTIYA) traverse the membrane as a helical segment. Over 217–347 (DYIAPLFDKF…GHWKLGHTVK (131 aa)) the chain is Nuclear. Positions 293 to 314 (DNQEESGMEARNEGEGDSEEVK) are disordered. The span at 300–314 (MEARNEGEGDSEEVK) shows a compositional bias: basic and acidic residues. His-335 serves as a coordination point for Zn(2+). The active site involves Glu-336. Residue His-339 coordinates Zn(2+). Residues 348–368 (NIIISQMNSFLCFFLFAVLIG) form a helical membrane-spanning segment. At 369-382 (RRELFAAFGFYDSQ) the chain is on the lumenal side. The helical transmembrane segment at 383 to 405 (PTLIGLLIIFQFIFSPYNEVLSF) threads the bilayer. Residues 406–475 (CLTVLSRRFE…LQALKNAKQD (70 aa)) are Nuclear-facing. Position 415 (Glu-415) interacts with Zn(2+).

This sequence belongs to the peptidase M48A family. Zn(2+) serves as cofactor.

It is found in the endoplasmic reticulum membrane. The protein resides in the nucleus inner membrane. Its subcellular location is the early endosome membrane. The protein localises to the late endosome membrane. It carries out the reaction Hydrolyzes the peptide bond -P2-(S-farnesyl or geranylgeranyl)C-P1'-P2'-P3'-COOH where P1' and P2' are amino acids with aliphatic side chains and P3' is any C-terminal residue.. Inhibited by HIV protease inhibitors, such as lopinavir, tipranavir and nelfinavir, leading to defects in lamin A/LMNA maturation and accumulation of prelamin-A/C precursors in cells. This causes defects in nuclear envelope integrity and release of DNA in the cytosol, activating the AIM2 inflammasome. Its function is as follows. Transmembrane metalloprotease whose catalytic activity is critical for processing lamin A/LMNA on the inner nuclear membrane and clearing clogged translocons on the endoplasmic reticulum. Proteolytically removes the C-terminal three residues of farnesylated proteins. Also plays an antiviral role independently of its protease activity by restricting enveloped RNA and DNA viruses. Mechanistically, controls IFITM antiviral pathway to hinder viruses from breaching the endosomal barrier by modulating membrane fluidity. The protein is CAAX prenyl protease 1 homolog of Mus musculus (Mouse).